Here is a 213-residue protein sequence, read N- to C-terminus: Large ribosomal subunit protein uL3 (213 aa).

Belongs to the universal ribosomal protein uL3 family. Part of the 50S ribosomal subunit. Forms a cluster with proteins L14 and L19.

One of the primary rRNA binding proteins, it binds directly near the 3'-end of the 23S rRNA, where it nucleates assembly of the 50S subunit. This is Large ribosomal subunit protein uL3 from Desulforudis audaxviator (strain MP104C).